The sequence spans 330 residues: Phytanoyl-CoA hydroxylase-interacting protein (330 aa).

One can recognise a Fibronectin type-III domain in the interval 6–115 (TPHSIEINNI…ETVEFCTGDY (110 aa)). Residues N14 and N325 are each glycosylated (N-linked (GlcNAc...) asparagine).

The protein belongs to the PHYHIP family. In terms of assembly, interacts with PHYH and ADGRB1. In terms of tissue distribution, highly expressed in the brain.

Functionally, its interaction with PHYH suggests a role in the development of the central system. The protein is Phytanoyl-CoA hydroxylase-interacting protein (PHYHIP) of Homo sapiens (Human).